We begin with the raw amino-acid sequence, 512 residues long: UDP-N-acetylglucosamine--peptide N-acetylglucosaminyltransferase GtfA subunit (512 aa).

Position 16-19 (16-19) interacts with UDP; the sequence is GVEY. His251 is an N-acetyl-D-glucosamine binding site. UDP is bound by residues 393-394 and 413-416; these read QH and EGFG.

Belongs to the glycosyltransferase group 1 family. Glycosyltransferase 4 subfamily. Forms a heterotetramer with 2 subunits each of GtfA and GtfB. Part of the accessory SecA2/SecY2 protein translocation apparatus.

It localises to the cytoplasm. The protein localises to the cell membrane. The catalysed reaction is L-seryl-[protein] + UDP-N-acetyl-alpha-D-glucosamine = 3-O-[N-acetyl-alpha-D-glucosaminyl]-L-seryl-[protein] + UDP + H(+). Its pathway is protein modification; protein glycosylation. Required for polymorphic O-glycosylation of the serine-rich repeat protein (SRRP) in this bacteria. Catalyzes the first step in glycosylation by transferring N-acetylglucosamine from UDP-GlcNAc to serine residues in the substrate protein. Part of the accessory SecA2/SecY2 system specifically required to export serine-rich repeat cell wall proteins encoded in the same operon. The GtfA-GtfB complex adds GlcNAc from UDP-GlcNAc to SRRP (experimentally characterized with a truncated SSR1 construct); the alpha linkage was shown for this enzyme but not the residues glycosylated on SRRP. The protein is UDP-N-acetylglucosamine--peptide N-acetylglucosaminyltransferase GtfA subunit of Limosilactobacillus reuteri subsp. suis (strain ATCC 53608 / LMG 31752 / 1063) (Lactobacillus reuteri).